A 271-amino-acid polypeptide reads, in one-letter code: MILLTIFWDTLLDILPIAAIIFGFQYIVIRKRIQRLPQVLAGFFMVWVGLSLFLVGLEQALFPMGELMASQLTNTDFLPAVEQGVQRHWADYYWVYLFAFAIGASTTIAEPSLIAVSIKAGEISGGTINPFMLRIAVALGMAFGITLGTWRIVMGWPLQWFVFAAYCLVIIQTLRSPKSIIPLAFDSGGVTTSTITVPIIAALGLGLAASIPGRSALMDGFGMIALACLFPIITVMGYAQIAQWKDKRKQTTPHLSYSKAPPPSKGDNNAL.

A run of 7 helical transmembrane segments spans residues 2–22 (ILLTIFWDTLLDILPIAAIIF), 36–56 (LPQVLAGFFMVWVGLSLFLVG), 94–114 (WVYLFAFAIGASTTIAEPSLI), 130–150 (PFMLRIAVALGMAFGITLGTW), 152–172 (IVMGWPLQWFVFAAYCLVIIQ), 193–213 (STITVPIIAALGLGLAASIPG), and 216–236 (ALMDGFGMIALACLFPIITVM). Residues 252–271 (TPHLSYSKAPPPSKGDNNAL) form a disordered region.

The protein belongs to the UmpA/UmpB family. In terms of assembly, heterodimer composed of UmpA and UmpB.

Its subcellular location is the cell membrane. Part of a two-component antiporter that catalyzes the efflux of Na(+), Li(+) and K(+) in exchange for external protons. Shows a preference for Na(+), followed by K(+) and Li(+). The polypeptide is Na(+), Li(+), K(+)/H(+) antiporter subunit B (Vreelandella zhaodongensis (Halomonas zhaodongensis)).